A 539-amino-acid chain; its full sequence is Chaperonin GroEL (539 aa).

ATP contacts are provided by residues Thr29–Pro32, Asp86–Thr90, Gly413, Asn476–Ala478, and Asp492.

Belongs to the chaperonin (HSP60) family. Forms a cylinder of 14 subunits composed of two heptameric rings stacked back-to-back. Interacts with the co-chaperonin GroES.

The protein resides in the cytoplasm. The catalysed reaction is ATP + H2O + a folded polypeptide = ADP + phosphate + an unfolded polypeptide.. Its function is as follows. Together with its co-chaperonin GroES, plays an essential role in assisting protein folding. The GroEL-GroES system forms a nano-cage that allows encapsulation of the non-native substrate proteins and provides a physical environment optimized to promote and accelerate protein folding. This is Chaperonin GroEL from Staphylococcus epidermidis.